The chain runs to 86 residues: Small ribosomal subunit protein uS17 (86 aa).

Belongs to the universal ribosomal protein uS17 family. As to quaternary structure, part of the 30S ribosomal subunit.

Functionally, one of the primary rRNA binding proteins, it binds specifically to the 5'-end of 16S ribosomal RNA. This is Small ribosomal subunit protein uS17 from Roseiflexus sp. (strain RS-1).